The following is a 339-amino-acid chain: Protein H339R (339 aa).

It belongs to the asfivirus H339R family. In terms of assembly, interacts with host NACA (alpha chain of nascent polypeptide-associated complex).

It localises to the host cytoplasm. The protein resides in the host nucleus. The chain is Protein H339R from African swine fever virus (isolate Tick/Malawi/Lil 20-1/1983) (ASFV).